We begin with the raw amino-acid sequence, 450 residues long: UPF0236 protein in vanSb 3'region (450 aa).

This sequence belongs to the UPF0236 family.

The protein is UPF0236 protein in vanSb 3'region of Streptococcus gallolyticus (Streptococcus bovis biotype I).